We begin with the raw amino-acid sequence, 121 residues long: Large ribosomal subunit protein bL12 (121 aa).

Belongs to the bacterial ribosomal protein bL12 family. Homodimer. Part of the ribosomal stalk of the 50S ribosomal subunit. Forms a multimeric L10(L12)X complex, where L10 forms an elongated spine to which 2 to 4 L12 dimers bind in a sequential fashion. Binds GTP-bound translation factors.

In terms of biological role, forms part of the ribosomal stalk which helps the ribosome interact with GTP-bound translation factors. Is thus essential for accurate translation. In Lactococcus lactis subsp. lactis (strain IL1403) (Streptococcus lactis), this protein is Large ribosomal subunit protein bL12.